A 148-amino-acid polypeptide reads, in one-letter code: MNIAKQQQAFLGIDYGKKRIGLAFASSPLLIPLPIGNVEARSSLTLTAQALVSIIKERAVTTVVFGNPLPMQKAYASSVQSEIQELAALIQEMTAIEVILWDERLSSAQAERMLKSDCGLNRKQRKNPSDSLAATLILSSFLDSRKLY.

Belongs to the YqgF nuclease family.

It is found in the cytoplasm. Its function is as follows. Could be a nuclease involved in processing of the 5'-end of pre-16S rRNA. The chain is Putative pre-16S rRNA nuclease from Chlamydia trachomatis serovar A (strain ATCC VR-571B / DSM 19440 / HAR-13).